Consider the following 275-residue polypeptide: Caspase-3 (275 aa).

M1 carries the N-acetylmethionine modification. 2 consecutive propeptides follow at residues 1–9 (MENTENSVD) and 10–28 (SKSI…KSMD). The residue at position 11 (K11) is an N6-acetyllysine. Position 26 is a phosphoserine (S26). Active-site residues include H121 and C163. C163 bears the S-nitrosocysteine; in inhibited form mark.

It belongs to the peptidase C14A family. Heterotetramer that consists of two anti-parallel arranged heterodimers, each one formed by a 17 kDa (p17) and a 12 kDa (p12) subunit. Interacts with BIRC6/bruce. Post-translationally, cleavage by granzyme B, caspase-6, caspase-8 and caspase-10 generates the two active subunits. Additional processing of the propeptides is likely due to the autocatalytic activity of the activated protease. Active heterodimers between the small subunit of caspase-7 protease and the large subunit of caspase-3 also occur and vice versa. In terms of processing, S-nitrosylated on its catalytic site cysteine in unstimulated cell lines and denitrosylated upon activation of the Fas apoptotic pathway, associated with an increase in intracellular caspase activity. Fas therefore activates caspase-3 not only by inducing the cleavage of the caspase zymogen to its active subunits, but also by stimulating the denitrosylation of its active site thiol. Ubiquitinated by BIRC6; this activity is inhibited by DIABLO/SMAC.

Its subcellular location is the cytoplasm. The enzyme catalyses Strict requirement for an Asp residue at positions P1 and P4. It has a preferred cleavage sequence of Asp-Xaa-Xaa-Asp-|- with a hydrophobic amino-acid residue at P2 and a hydrophilic amino-acid residue at P3, although Val or Ala are also accepted at this position.. Its activity is regulated as follows. Inhibited by BIRC6; following inhibition of BIRC6-caspase binding by DIABLO/SMAC, BIRC6 is subjected to caspase cleavage, leading to an increase in active caspases. Functionally, involved in the activation cascade of caspases responsible for apoptosis execution. At the onset of apoptosis, it proteolytically cleaves poly(ADP-ribose) polymerase PARP1 at a '216-Asp-|-Gly-217' bond. Cleaves and activates sterol regulatory element binding proteins (SREBPs) between the basic helix-loop-helix leucine zipper domain and the membrane attachment domain. Cleaves and activates caspase-6, -7 and -9 (CASP6, CASP7 and CASP9, respectively). Cleaves and inactivates interleukin-18 (IL18). Triggers cell adhesion in sympathetic neurons through RET cleavage. Cleaves IL-1 beta between an Asp and an Ala, releasing the mature cytokine which is involved in a variety of inflammatory processes. Cleaves and inhibits serine/threonine-protein kinase AKT1 in response to oxidative stress. Acts as an inhibitor of type I interferon production during virus-induced apoptosis by mediating cleavage of antiviral proteins CGAS, IRF3 and MAVS, thereby preventing cytokine overproduction. Also involved in pyroptosis by mediating cleavage and activation of gasdermin-E (GSDME). Cleaves XRCC4 and phospholipid scramblase proteins XKR4, XKR8 and XKR9, leading to promote phosphatidylserine exposure on apoptotic cell surface. Cleaves BIRC6 following inhibition of BIRC6-caspase binding by DIABLO/SMAC. The chain is Caspase-3 (CASP3) from Bos taurus (Bovine).